The sequence spans 511 residues: Cytochrome P450 4B1 (511 aa).

A heme-binding site is contributed by Glu-315. Ser-436 carries the post-translational modification Phosphoserine. Heme is bound at residue Cys-453.

Belongs to the cytochrome P450 family. Requires heme as cofactor. In terms of tissue distribution, detected in the liver and lung (at protein level).

It localises to the endoplasmic reticulum membrane. The protein resides in the microsome membrane. It carries out the reaction an organic molecule + reduced [NADPH--hemoprotein reductase] + O2 = an alcohol + oxidized [NADPH--hemoprotein reductase] + H2O + H(+). Functionally, cytochromes P450 are a group of heme-thiolate monooxygenases. In liver microsomes, this enzyme is involved in an NADPH-dependent electron transport pathway. It oxidizes a variety of structurally unrelated compounds, including steroids, fatty acids, and xenobiotics. The chain is Cytochrome P450 4B1 (CYP4B1) from Homo sapiens (Human).